Here is a 488-residue protein sequence, read N- to C-terminus: 3-octaprenyl-4-hydroxybenzoate carboxy-lyase (488 aa).

Asn172 provides a ligand contact to Mn(2+). Prenylated FMN is bound by residues 175-177 (IYR), 189-191 (RWL), and 194-195 (RG). Position 238 (Glu238) interacts with Mn(2+). Asp287 functions as the Proton donor in the catalytic mechanism.

Belongs to the UbiD family. Homohexamer. It depends on prenylated FMN as a cofactor. The cofactor is Mn(2+).

Its subcellular location is the cell membrane. The enzyme catalyses a 4-hydroxy-3-(all-trans-polyprenyl)benzoate + H(+) = a 2-(all-trans-polyprenyl)phenol + CO2. The protein operates within cofactor biosynthesis; ubiquinone biosynthesis. Catalyzes the decarboxylation of 3-octaprenyl-4-hydroxy benzoate to 2-octaprenylphenol, an intermediate step in ubiquinone biosynthesis. The sequence is that of 3-octaprenyl-4-hydroxybenzoate carboxy-lyase from Pseudomonas aeruginosa (strain LESB58).